The following is a 95-amino-acid chain: MAPVHVLCCVSVLLATFYLTPTESAGSLVSYTPNSCCYGFQQHPPPVQILKEWYPTSPACPKPGVILLTKRGRQICADPSKNWVRQLMQRLPAIA.

Residues 1–24 (MAPVHVLCCVSVLLATFYLTPTES) form the signal peptide.

This chain is Protein K6 (K6), found in Human herpesvirus 8 type P (isolate GK18) (HHV-8).